The primary structure comprises 137 residues: Peptide methionine sulfoxide reductase MsrB (137 aa).

The MsrB domain occupies 7–129 (PDHPATELNE…NSASLSFTDG (123 aa)). Residues Cys-46, Cys-49, Cys-95, and Cys-98 each coordinate Zn(2+). Residue Cys-118 is the Nucleophile of the active site.

It belongs to the MsrB Met sulfoxide reductase family. Zn(2+) is required as a cofactor.

It carries out the reaction L-methionyl-[protein] + [thioredoxin]-disulfide + H2O = L-methionyl-(R)-S-oxide-[protein] + [thioredoxin]-dithiol. The chain is Peptide methionine sulfoxide reductase MsrB from Serratia proteamaculans (strain 568).